We begin with the raw amino-acid sequence, 220 residues long: NAD(P)H-hydrate epimerase (220 aa).

In terms of domain architecture, YjeF N-terminal spans 6–203; the sequence is ARHLTTLATG…SFDLPEALFH (198 aa). 53–57 is a (6S)-NADPHX binding site; sequence HNGGV. N54 and D116 together coordinate K(+). (6S)-NADPHX is bound by residues 120-126 and D149; that span reads GMRLEGP. T152 is a K(+) binding site.

It belongs to the NnrE/AIBP family. K(+) serves as cofactor.

It carries out the reaction (6R)-NADHX = (6S)-NADHX. The catalysed reaction is (6R)-NADPHX = (6S)-NADPHX. In terms of biological role, catalyzes the epimerization of the S- and R-forms of NAD(P)HX, a damaged form of NAD(P)H that is a result of enzymatic or heat-dependent hydration. This is a prerequisite for the S-specific NAD(P)H-hydrate dehydratase to allow the repair of both epimers of NAD(P)HX. This chain is NAD(P)H-hydrate epimerase, found in Truepera radiovictrix (strain DSM 17093 / CIP 108686 / LMG 22925 / RQ-24).